Consider the following 336-residue polypeptide: Holliday junction branch migration complex subunit RuvB (336 aa).

Residues 1-180 (MRRTGIRLSW…FGIVEHLEYY (180 aa)) form a large ATPase domain (RuvB-L) region. Residues L18, R19, G60, K63, T64, T65, 127-129 (EDF), R170, Y180, and R217 contribute to the ATP site. T64 is a Mg(2+) binding site. A small ATPAse domain (RuvB-S) region spans residues 181–251 (TPEELAQGVM…RALEALAALG (71 aa)). The interval 254–336 (ELGLEKRDRE…PPPVGPLLEP (83 aa)) is head domain (RuvB-H). DNA is bound by residues R309 and R314.

This sequence belongs to the RuvB family. Homohexamer. Forms an RuvA(8)-RuvB(12)-Holliday junction (HJ) complex. HJ DNA is sandwiched between 2 RuvA tetramers; dsDNA enters through RuvA and exits via RuvB. An RuvB hexamer assembles on each DNA strand where it exits the tetramer. Each RuvB hexamer is contacted by two RuvA subunits (via domain III) on 2 adjacent RuvB subunits; this complex drives branch migration. In the full resolvosome a probable DNA-RuvA(4)-RuvB(12)-RuvC(2) complex forms which resolves the HJ.

Its subcellular location is the cytoplasm. The catalysed reaction is ATP + H2O = ADP + phosphate + H(+). The RuvA-RuvB-RuvC complex processes Holliday junction (HJ) DNA during genetic recombination and DNA repair, while the RuvA-RuvB complex plays an important role in the rescue of blocked DNA replication forks via replication fork reversal (RFR). RuvA specifically binds to HJ cruciform DNA, conferring on it an open structure. The RuvB hexamer acts as an ATP-dependent pump, pulling dsDNA into and through the RuvAB complex. RuvB forms 2 homohexamers on either side of HJ DNA bound by 1 or 2 RuvA tetramers; 4 subunits per hexamer contact DNA at a time. Coordinated motions by a converter formed by DNA-disengaged RuvB subunits stimulates ATP hydrolysis and nucleotide exchange. Immobilization of the converter enables RuvB to convert the ATP-contained energy into a lever motion, pulling 2 nucleotides of DNA out of the RuvA tetramer per ATP hydrolyzed, thus driving DNA branch migration. The RuvB motors rotate together with the DNA substrate, which together with the progressing nucleotide cycle form the mechanistic basis for DNA recombination by continuous HJ branch migration. Branch migration allows RuvC to scan DNA until it finds its consensus sequence, where it cleaves and resolves cruciform DNA. The protein is Holliday junction branch migration complex subunit RuvB of Thermus thermophilus (strain ATCC BAA-163 / DSM 7039 / HB27).